An 80-amino-acid polypeptide reads, in one-letter code: Acyl carrier protein (80 aa).

Positions 2–77 constitute a Carrier domain; sequence SEINQKVVDI…QVVEYLEKRL (76 aa). S37 carries the O-(pantetheine 4'-phosphoryl)serine modification.

The protein belongs to the acyl carrier protein (ACP) family. Post-translationally, 4'-phosphopantetheine is transferred from CoA to a specific serine of apo-ACP by AcpS. This modification is essential for activity because fatty acids are bound in thioester linkage to the sulfhydryl of the prosthetic group.

It is found in the cytoplasm. Its pathway is lipid metabolism; fatty acid biosynthesis. Its function is as follows. Carrier of the growing fatty acid chain in fatty acid biosynthesis. In Amoebophilus asiaticus (strain 5a2), this protein is Acyl carrier protein.